We begin with the raw amino-acid sequence, 856 residues long: Facilitated trehalose transporter Tret1 (856 aa).

Disordered stretches follow at residues methionine 1–lysine 27 and aspartate 62–serine 202. The Cytoplasmic portion of the chain corresponds to methionine 1–proline 389. Over residues valine 69–threonine 80 the composition is skewed to polar residues. Residues glutamate 133–glutamine 142 show a composition bias toward basic and acidic residues. The span at glycine 170–alanine 180 shows a compositional bias: polar residues. Serine 247, serine 248, serine 249, serine 319, and serine 321 each carry phosphoserine. The tract at residues leucine 326–serine 345 is disordered. Polar residues predominate over residues arginine 329–threonine 340. A helical membrane pass occupies residues isoleucine 390–glycine 410. The Extracellular segment spans residues phenylalanine 411–serine 439. Asparagine 427 carries an N-linked (GlcNAc...) asparagine glycan. A helical membrane pass occupies residues tryptophan 440–isoleucine 460. At glutamate 461 to threonine 472 the chain is on the cytoplasmic side. Residues alanine 473 to leucine 493 traverse the membrane as a helical segment. Over cysteine 494–arginine 496 the chain is Extracellular. The chain crosses the membrane as a helical span at residues phenylalanine 497 to threonine 517. Residues valine 518–glycine 527 lie on the Cytoplasmic side of the membrane. A helical transmembrane segment spans residues leucine 528–methionine 548. A glycan (N-linked (GlcNAc...) asparagine) is linked at asparagine 549. The Extracellular portion of the chain corresponds to asparagine 549–serine 551. Residues methionine 552–proline 572 traverse the membrane as a helical segment. Topologically, residues glutamate 573–proline 635 are cytoplasmic. Residues leucine 636–phenylalanine 656 form a helical membrane-spanning segment. The Extracellular segment spans residues tyrosine 657–asparagine 672. A helical membrane pass occupies residues isoleucine 673–isoleucine 693. Residues aspartate 694 to lysine 699 are Cytoplasmic-facing. The helical transmembrane segment at isoleucine 700–phenylalanine 720 threads the bilayer. Residues tyrosine 721–cysteine 739 lie on the Extracellular side of the membrane. The helical transmembrane segment at phenylalanine 740–glycine 760 threads the bilayer. The Cytoplasmic portion of the chain corresponds to glutamate 761–lysine 766. Residues isoleucine 767–threonine 787 form a helical membrane-spanning segment. The Extracellular portion of the chain corresponds to lysine 788–histidine 800. The helical transmembrane segment at glycine 801 to valine 821 threads the bilayer. The Cytoplasmic portion of the chain corresponds to proline 822–methionine 856. A phosphoserine mark is found at serine 844 and serine 845.

This sequence belongs to the major facilitator superfamily. Sugar transporter (TC 2.A.1.1) family. Trehalose transporter subfamily.

It localises to the cell membrane. In terms of biological role, low-capacity facilitative transporter for trehalose. Does not transport maltose, sucrose or lactose. Mediates the bidirectional transfer of trehalose. Responsible for the transport of trehalose synthesized in the fat body and the incorporation of trehalose into other tissues that require a carbon source, thereby regulating trehalose levels in the hemolymph. This Drosophila erecta (Fruit fly) protein is Facilitated trehalose transporter Tret1.